Consider the following 721-residue polypeptide: Fatty acid oxidation complex subunit alpha (721 aa).

The segment at 1–190 (MIYEGKAITV…KVGAVDAVVA (190 aa)) is enoyl-CoA hydratase/isomerase. Residue Asp-297 coordinates substrate. Positions 312 to 721 (KDVKQAAVLG…SFFGQASSEE (410 aa)) are 3-hydroxyacyl-CoA dehydrogenase. Residues Met-325, Asp-344, 401 to 403 (VVE), Lys-408, and Ser-430 contribute to the NAD(+) site. His-451 acts as the For 3-hydroxyacyl-CoA dehydrogenase activity in catalysis. Asn-454 serves as a coordination point for NAD(+). The substrate site is built by Asn-501 and Tyr-660.

This sequence in the N-terminal section; belongs to the enoyl-CoA hydratase/isomerase family. It in the C-terminal section; belongs to the 3-hydroxyacyl-CoA dehydrogenase family. Heterotetramer of two alpha chains (FadB) and two beta chains (FadA).

It carries out the reaction a (3S)-3-hydroxyacyl-CoA + NAD(+) = a 3-oxoacyl-CoA + NADH + H(+). The catalysed reaction is a (3S)-3-hydroxyacyl-CoA = a (2E)-enoyl-CoA + H2O. The enzyme catalyses a 4-saturated-(3S)-3-hydroxyacyl-CoA = a (3E)-enoyl-CoA + H2O. It catalyses the reaction (3S)-3-hydroxybutanoyl-CoA = (3R)-3-hydroxybutanoyl-CoA. It carries out the reaction a (3Z)-enoyl-CoA = a 4-saturated (2E)-enoyl-CoA. The catalysed reaction is a (3E)-enoyl-CoA = a 4-saturated (2E)-enoyl-CoA. Its pathway is lipid metabolism; fatty acid beta-oxidation. Functionally, involved in the aerobic and anaerobic degradation of long-chain fatty acids via beta-oxidation cycle. Catalyzes the formation of 3-oxoacyl-CoA from enoyl-CoA via L-3-hydroxyacyl-CoA. It can also use D-3-hydroxyacyl-CoA and cis-3-enoyl-CoA as substrate. The protein is Fatty acid oxidation complex subunit alpha of Pseudomonas syringae pv. syringae (strain B728a).